The chain runs to 665 residues: MATGRYIVEVEKGKQGVDGGSPSVGPVYRSIYAKDGFPEPPDDLVSAWDIFRLSVEKSPNNPMLGRREIVDGKAGKYVWQTYKEVHNVVIKLGNSIRTIGVGKGDKCGIYGANSPEWIISMEACNAHGLYCVPLYDTLGAGAIEFIICHAEVSLAFAEENKISELLKTAPKSTKYLKYIVSFGEVTNNQRVEAERHRLTIYSWDQFLKLGEGKHYELPEKRRSDVCTIMYTSGTTGDPKGVLLTNESIIHLLEGVKKLLKTIDEELTSKDVYLSYLPLAHIFDRVIEELCIYEAASIGFWRGDVKILIEDIAALKPTVFCAVPRVLERIYTGLQQKLSDGGFVKKKLFNFAFKYKHKNMEKGQPHEQASPIADKIVFKKVKEGLGGNVRLILSGAAPLAAHIESFLRVVACAHVLQGYGLTESCGGTFVSIPNELSMLGTVGPPVPNVDIRLESVPEMGYDALASNPRGEICIRGKTLFSGYYKREDLTQEVFIDGWLHTGDVGEWQPDGAMKIIDRKKNIFKLSQGEYVAVENLENIYSHVAAIESIWVYGNSYESYLVAVVCPSKIQIEHWAKEHKVSGDFESICRNQKTKEFVLGEFNRVAKDKKLKGFELIKGVHLDTVPFDMERDLITPSYKMKRPQLLKYYQKEIDEMYKKNREVQLRV.

228-239 (IMYTSGTTGDPK) is a binding site for ATP. The fatty acid-binding stretch occupies residues 495–519 (DGWLHTGDVGEWQPDGAMKIIDRKK).

This sequence belongs to the ATP-dependent AMP-binding enzyme family. The cofactor is Mg(2+).

The enzyme catalyses a long-chain fatty acid + ATP + CoA = a long-chain fatty acyl-CoA + AMP + diphosphate. It participates in lipid metabolism; fatty acid metabolism. Functionally, activation of long-chain fatty acids for both synthesis of cellular lipids, and degradation via beta-oxidation. Preferentially uses palmitate, palmitoleate, oleate and linoleate. The polypeptide is Long chain acyl-CoA synthetase 3 (LACS3) (Arabidopsis thaliana (Mouse-ear cress)).